The sequence spans 143 residues: Nucleoside diphosphate kinase (143 aa).

ATP-binding residues include lysine 11, phenylalanine 59, arginine 87, threonine 93, arginine 104, and asparagine 114. Histidine 117 functions as the Pros-phosphohistidine intermediate in the catalytic mechanism.

The protein belongs to the NDK family. In terms of assembly, homotetramer. Mg(2+) is required as a cofactor.

Its subcellular location is the cytoplasm. The enzyme catalyses a 2'-deoxyribonucleoside 5'-diphosphate + ATP = a 2'-deoxyribonucleoside 5'-triphosphate + ADP. It carries out the reaction a ribonucleoside 5'-diphosphate + ATP = a ribonucleoside 5'-triphosphate + ADP. Major role in the synthesis of nucleoside triphosphates other than ATP. The ATP gamma phosphate is transferred to the NDP beta phosphate via a ping-pong mechanism, using a phosphorylated active-site intermediate. In Shewanella oneidensis (strain ATCC 700550 / JCM 31522 / CIP 106686 / LMG 19005 / NCIMB 14063 / MR-1), this protein is Nucleoside diphosphate kinase.